The primary structure comprises 1976 residues: Protein TIC 214 (1976 aa).

6 helical membrane-spanning segments follow: residues 11 to 31, 64 to 84, 87 to 107, 126 to 146, 173 to 193, and 221 to 241; these read LLLL…YYGF, FIMG…HLAL, PHTL…FFWN, LSIQ…HFVL, FFGW…VLSW, and IFSI…PSPI. Residues 619–635 show a composition bias toward acidic residues; sequence FEEEEEEEEEDDQEEST. 2 disordered regions span residues 619–642 and 830–861; these read FEEE…GIRS and SSYV…EDKR. Basic and acidic residues predominate over residues 836-861; that stretch reads GAKEKEKIEEEHEEEKGEYKRKEDKR. The next 2 helical transmembrane spans lie at 1054–1074 and 1202–1222; these read IIKI…FFVL and IYMS…QFFL. Residues 1633-1665 show a composition bias toward basic and acidic residues; that stretch reads QKERFHPKPKVESNQKGYLELENRNRDEKERQH. The segment at 1633–1669 is disordered; the sequence is QKERFHPKPKVESNQKGYLELENRNRDEKERQHQGNL.

It belongs to the TIC214 family. In terms of assembly, part of the Tic complex.

It localises to the plastid. The protein localises to the chloroplast inner membrane. Involved in protein precursor import into chloroplasts. May be part of an intermediate translocation complex acting as a protein-conducting channel at the inner envelope. The polypeptide is Protein TIC 214 (Nymphaea alba (White water-lily)).